Here is a 427-residue protein sequence, read N- to C-terminus: Enolase 2 (427 aa).

Residue Gln165 coordinates (2R)-2-phosphoglycerate. The Proton donor role is filled by Glu207. Asp244, Glu287, and Asp314 together coordinate Mg(2+). (2R)-2-phosphoglycerate is bound by residues Lys339, Arg368, Ser369, and Lys390. Lys339 (proton acceptor) is an active-site residue.

It belongs to the enolase family. Component of the RNA degradosome, a multiprotein complex involved in RNA processing and mRNA degradation. Requires Mg(2+) as cofactor.

The protein localises to the cytoplasm. It localises to the secreted. Its subcellular location is the cell surface. The catalysed reaction is (2R)-2-phosphoglycerate = phosphoenolpyruvate + H2O. It participates in carbohydrate degradation; glycolysis; pyruvate from D-glyceraldehyde 3-phosphate: step 4/5. Functionally, catalyzes the reversible conversion of 2-phosphoglycerate (2-PG) into phosphoenolpyruvate (PEP). It is essential for the degradation of carbohydrates via glycolysis. In Pseudomonas syringae pv. tomato (strain ATCC BAA-871 / DC3000), this protein is Enolase 2.